Consider the following 427-residue polypeptide: Glutamate-1-semialdehyde 2,1-aminomutase (427 aa).

K265 is modified (N6-(pyridoxal phosphate)lysine).

Belongs to the class-III pyridoxal-phosphate-dependent aminotransferase family. HemL subfamily. As to quaternary structure, homodimer. It depends on pyridoxal 5'-phosphate as a cofactor.

It is found in the cytoplasm. The catalysed reaction is (S)-4-amino-5-oxopentanoate = 5-aminolevulinate. The protein operates within porphyrin-containing compound metabolism; protoporphyrin-IX biosynthesis; 5-aminolevulinate from L-glutamyl-tRNA(Glu): step 2/2. The sequence is that of Glutamate-1-semialdehyde 2,1-aminomutase from Pseudomonas putida (strain ATCC 47054 / DSM 6125 / CFBP 8728 / NCIMB 11950 / KT2440).